The sequence spans 74 residues: ATP synthase subunit c (74 aa).

2 helical membrane passes run 13–33 (ISVI…ASLI) and 51–71 (ILGF…AFLI).

The protein belongs to the ATPase C chain family. F-type ATPases have 2 components, F(1) - the catalytic core - and F(0) - the membrane proton channel. F(1) has five subunits: alpha(3), beta(3), gamma(1), delta(1), epsilon(1). F(0) has three main subunits: a(1), b(2) and c(10-14). The alpha and beta chains form an alternating ring which encloses part of the gamma chain. F(1) is attached to F(0) by a central stalk formed by the gamma and epsilon chains, while a peripheral stalk is formed by the delta and b chains.

The protein resides in the cell inner membrane. Functionally, f(1)F(0) ATP synthase produces ATP from ADP in the presence of a proton or sodium gradient. F-type ATPases consist of two structural domains, F(1) containing the extramembraneous catalytic core and F(0) containing the membrane proton channel, linked together by a central stalk and a peripheral stalk. During catalysis, ATP synthesis in the catalytic domain of F(1) is coupled via a rotary mechanism of the central stalk subunits to proton translocation. Key component of the F(0) channel; it plays a direct role in translocation across the membrane. A homomeric c-ring of between 10-14 subunits forms the central stalk rotor element with the F(1) delta and epsilon subunits. In Granulibacter bethesdensis (strain ATCC BAA-1260 / CGDNIH1), this protein is ATP synthase subunit c.